The sequence spans 271 residues: Magnetosome protein MamX (271 aa).

Residues 1-10 lie on the Cytoplasmic side of the membrane; it reads MSSKAVAHPN. Residues 11–31 traverse the membrane as a helical segment; sequence IAVWIMALGIAFSMALVLTAV. At 32-271 the chain is on the lumenal side; it reads FNANPWEDHT…NAGGMDAEER (240 aa). The MCR (magnetochrome) 1 motif lies at 48-71; sequence IVAGMPAPHRDGREKMVCSSCHIV. Cys65, Cys68, His69, Cys104, Cys107, and His108 together coordinate heme. The short motif at 87 to 110 is the MCR 2 element; it reads IVQGTPAPHVDGREKMPCASCHTI.

It belongs to the magnetosome MamX family. Heme is required as a cofactor.

It localises to the magnetosome membrane. Required for correct biomineralization of the magnetosome, may be involved in redox control of biomineralization. May function with MamY, MamZ amd Mms6. This Paramagnetospirillum magneticum (strain ATCC 700264 / AMB-1) (Magnetospirillum magneticum) protein is Magnetosome protein MamX (mamX).